A 261-amino-acid polypeptide reads, in one-letter code: UPF0246 protein AZOSEA34360 (261 aa).

Belongs to the UPF0246 family.

The chain is UPF0246 protein AZOSEA34360 from Aromatoleum aromaticum (strain DSM 19018 / LMG 30748 / EbN1) (Azoarcus sp. (strain EbN1)).